The primary structure comprises 181 residues: Adenylyl-sulfate kinase (181 aa).

12–19 is a binding site for ATP; it reads GLSGAGKT. The active-site Phosphoserine intermediate is serine 86.

This sequence belongs to the APS kinase family.

It carries out the reaction adenosine 5'-phosphosulfate + ATP = 3'-phosphoadenylyl sulfate + ADP + H(+). It functions in the pathway sulfur metabolism; hydrogen sulfide biosynthesis; sulfite from sulfate: step 2/3. Its function is as follows. Catalyzes the synthesis of activated sulfate. The chain is Adenylyl-sulfate kinase from Rippkaea orientalis (strain PCC 8801 / RF-1) (Cyanothece sp. (strain PCC 8801)).